The following is a 355-amino-acid chain: Peptide chain release factor 1 (355 aa).

Gln233 carries the post-translational modification N5-methylglutamine.

The protein belongs to the prokaryotic/mitochondrial release factor family. Methylated by PrmC. Methylation increases the termination efficiency of RF1.

Its subcellular location is the cytoplasm. Its function is as follows. Peptide chain release factor 1 directs the termination of translation in response to the peptide chain termination codons UAG and UAA. The sequence is that of Peptide chain release factor 1 from Bacillus cereus (strain ATCC 14579 / DSM 31 / CCUG 7414 / JCM 2152 / NBRC 15305 / NCIMB 9373 / NCTC 2599 / NRRL B-3711).